A 366-amino-acid polypeptide reads, in one-letter code: MGRHSCCYKQKLRKGLWSPEEDEKLLTHITNHGHGCWSSVPKLAGLQRCGKSCRLRWINYLRPDLKRGAFSPEEENLIVELHAVLGNRWSQIASRLPGRTDNEIKNLWNSSIKKKLKQRGIDPNTHKPISEVESFSDKDKPTTSNNKRSGNDHKSPSSSSATNQDFFLERPSDLSDYFGFQKLNFNSNLGLSVTTDSSLCSMIPPQFSPGNMVGSVLQTPVCVKPSISLPPDNNSSSPISGGDHVKLAAPNWEFQTNNNNTSNFFDNGGFSWSIPNSSTSSSQVKPNHNFEEIKWSEYLNTPFFIGSTVQSQTSQPIYIKSETDYLANVSNMTDPWSQNENLGTTETSDVFSKDLQRMAVSFGQSL.

2 consecutive HTH myb-type domains span residues 9–61 (KQKL…INYL) and 62–116 (RPDL…KKKL). DNA-binding regions (H-T-H motif) lie at residues 37–61 (WSSV…INYL) and 89–112 (WSQI…NSSI). The disordered stretch occupies residues 115–164 (KLKQRGIDPNTHKPISEVESFSDKDKPTTSNNKRSGNDHKSPSSSSATNQ). Basic and acidic residues predominate over residues 124-141 (NTHKPISEVESFSDKDKP).

As to expression, expressed specifically in guard cells. Expressed in sink tissues, such as xylem, roots and developing seeds.

The protein localises to the nucleus. Transcription factor that coordinates a small network of downstream target genes required for several aspects of plant growth and development, such as xylem formation and xylem cell differentiation, and lateral root formation. Regulates a specific set of target genes by binding DNA to the AC cis-element 5'-ACCTAC-3'. Functions as a transcriptional regulator of stomatal closure. Plays a role the regulation of stomatal pore size independently of abscisic acid (ABA). Required for seed coat mucilage deposition during the development of the seed coat epidermis. Involved in the induction of trichome initiation and branching by positively regulating GL1 and GL2. Required for gibberellin (GA) biosynthesis and degradation by positively affecting the expression of the enzymes that convert GA9 into the bioactive GA4, as well as the enzymes involved in the degradation of GA4. This is Transcription factor MYB61 from Arabidopsis thaliana (Mouse-ear cress).